Reading from the N-terminus, the 68-residue chain is Copper transport protein ATOX1 (68 aa).

The region spanning 1–63 is the HMA domain; it reads MPKHEFSVDM…TLNKTGKAVS (63 aa). Cys12 and Cys15 together coordinate Cu cation. A Phosphoserine modification is found at Ser47. Lys60 carries the N6-acetyllysine modification.

The protein belongs to the ATX1 family. Homodimer. Interacts with ATP7B. Interacts with ATP7A. Interacts (via dimer form) with SLC31A1 (via C-terminal domain); this interaction improves ATOX1 stability and controls intracellular Cu(I) levels.

Its function is as follows. Binds and deliver cytosolic copper to the copper ATPase proteins. May be important in cellular antioxidant defense. This Rattus norvegicus (Rat) protein is Copper transport protein ATOX1.